We begin with the raw amino-acid sequence, 435 residues long: Glutamyl-tRNA reductase (435 aa).

Substrate-binding positions include 49-52, Ser109, 114-116, and Gln120; these read TCNR and ETQ. Cys50 acts as the Nucleophile in catalysis. Residue 189-194 coordinates NADP(+); the sequence is GAGEMS.

This sequence belongs to the glutamyl-tRNA reductase family. Homodimer.

The enzyme catalyses (S)-4-amino-5-oxopentanoate + tRNA(Glu) + NADP(+) = L-glutamyl-tRNA(Glu) + NADPH + H(+). Its pathway is porphyrin-containing compound metabolism; protoporphyrin-IX biosynthesis; 5-aminolevulinate from L-glutamyl-tRNA(Glu): step 1/2. In terms of biological role, catalyzes the NADPH-dependent reduction of glutamyl-tRNA(Glu) to glutamate 1-semialdehyde (GSA). This chain is Glutamyl-tRNA reductase, found in Listeria monocytogenes serotype 4b (strain CLIP80459).